A 142-amino-acid chain; its full sequence is Nucleoside diphosphate kinase (142 aa).

6 residues coordinate ATP: lysine 9, phenylalanine 57, arginine 85, threonine 91, arginine 102, and asparagine 112. Histidine 115 acts as the Pros-phosphohistidine intermediate in catalysis.

This sequence belongs to the NDK family. In terms of assembly, homotetramer. Requires Mg(2+) as cofactor.

The protein localises to the cytoplasm. It catalyses the reaction a 2'-deoxyribonucleoside 5'-diphosphate + ATP = a 2'-deoxyribonucleoside 5'-triphosphate + ADP. The enzyme catalyses a ribonucleoside 5'-diphosphate + ATP = a ribonucleoside 5'-triphosphate + ADP. Functionally, major role in the synthesis of nucleoside triphosphates other than ATP. The ATP gamma phosphate is transferred to the NDP beta phosphate via a ping-pong mechanism, using a phosphorylated active-site intermediate. This Dehalococcoides mccartyi (strain ATCC BAA-2100 / JCM 16839 / KCTC 5957 / BAV1) protein is Nucleoside diphosphate kinase.